We begin with the raw amino-acid sequence, 223 residues long: Uracil phosphoribosyltransferase (223 aa).

Residues arginine 86, arginine 111, and aspartate 145–threonine 153 contribute to the 5-phospho-alpha-D-ribose 1-diphosphate site. Uracil is bound by residues isoleucine 209 and glycine 214–alanine 216. Aspartate 215 lines the 5-phospho-alpha-D-ribose 1-diphosphate pocket.

This sequence belongs to the UPRTase family. Requires Mg(2+) as cofactor.

It catalyses the reaction UMP + diphosphate = 5-phospho-alpha-D-ribose 1-diphosphate + uracil. It participates in pyrimidine metabolism; UMP biosynthesis via salvage pathway; UMP from uracil: step 1/1. With respect to regulation, allosterically activated by GTP. In terms of biological role, catalyzes the conversion of uracil and 5-phospho-alpha-D-ribose 1-diphosphate (PRPP) to UMP and diphosphate. This is Uracil phosphoribosyltransferase from Natronomonas pharaonis (strain ATCC 35678 / DSM 2160 / CIP 103997 / JCM 8858 / NBRC 14720 / NCIMB 2260 / Gabara) (Halobacterium pharaonis).